The primary structure comprises 128 residues: Spore germination protein 1/2/3-related protein (128 aa).

The first 26 residues, 1-26, serve as a signal peptide directing secretion; sequence MNIRNTLVLLVSTVLVLMSCSIGCYA. N-linked (GlcNAc...) asparagine glycosylation is found at Asn55 and Asn119.

Belongs to the Dictyostelium gerABC family.

The protein resides in the secreted. This is Spore germination protein 1/2/3-related protein from Dictyostelium discoideum (Social amoeba).